The chain runs to 86 residues: uncharacterized protein (86 aa).

Residues 1-21 (MLSNSTSRNRHSKHNKKNTRE) form a disordered region. Over residues 8 to 17 (RNRHSKHNKK) the composition is skewed to basic residues.

This is an uncharacterized protein from Acidianus convivator (ATV).